The chain runs to 762 residues: Acyl-homoserine lactone acylase PvdQ (762 aa).

A signal peptide spans 1–23 (MGMRTVLTGLAGMLLGSMMPVQA). Residues 194-216 (ALSGEQAFQVAEQRRQRFRLERG) constitute a propeptide, spacer peptide. Serine 217 acts as the Nucleophile in catalysis.

The protein belongs to the peptidase S45 family. As to quaternary structure, heterodimer of an alpha subunit and a beta subunit processed from the same precursor.

It localises to the periplasm. The catalysed reaction is an N-acyl-L-homoserine lactone + H2O = L-homoserine lactone + a carboxylate. In terms of biological role, catalyzes the deacylation of acyl-homoserine lactone (AHL or acyl-HSL), releasing homoserine lactone (HSL) and the corresponding fatty acid. Possesses a specificity for the degradation of long-chain acyl-HSLs (side chains of 11 to 14 carbons in length). Degrades 3-oxo-C12-HSL, one of the two main AHL signal molecules of P.aeruginosa, and thereby functions as a quorum quencher, inhibiting the las quorum-sensing system. Therefore, may enable P.aeruginosa to modulate its own quorum-sensing-dependent pathogenic potential. Also appears to be required for pyoverdin biosynthesis. The chain is Acyl-homoserine lactone acylase PvdQ (pvdQ) from Pseudomonas aeruginosa (strain ATCC 15692 / DSM 22644 / CIP 104116 / JCM 14847 / LMG 12228 / 1C / PRS 101 / PAO1).